The sequence spans 332 residues: Adenosine receptor A2b (332 aa).

Over 1–8 the chain is Extracellular; the sequence is MQLETQDA. A helical membrane pass occupies residues 9-33; it reads LYVALELVIAALAVAGNVLVCAAVG. Topologically, residues 34–43 are cytoplasmic; the sequence is ASSALQTPTN. A helical transmembrane segment spans residues 44-67; sequence YFLVSLATADVAVGLFAIPFAITI. Residues 68–78 lie on the Extracellular side of the membrane; it reads SLGFCTDFHGC. A disulfide bridge links Cys-78 with Cys-171. Residues 79-101 traverse the membrane as a helical segment; the sequence is LFLACFVLVLTQSSIFSLLAVAV. Residues 102–121 lie on the Cytoplasmic side of the membrane; it reads DRYLAIRVPLRYKGLVTGTR. The chain crosses the membrane as a helical span at residues 122 to 144; that stretch reads ARGIIAVLWVLAFGIGLTPFLGW. Residues 145-178 lie on the Extracellular side of the membrane; it reads NSKDSATSNCTELGDGIANKSCCPVTCLFENVVP. N-linked (GlcNAc...) asparagine glycosylation is found at Asn-153 and Asn-163. Position 174 (Glu-174) interacts with adenosine. The helical transmembrane segment at 179–203 threads the bilayer; that stretch reads MSYMVYFNFFGCVLPPLLIMLVIYI. At 204–235 the chain is on the cytoplasmic side; that stretch reads KIFMVACKQLQRMELMDHSRTTLQREIHAAKS. A helical transmembrane segment spans residues 236–259; it reads LAMIVGIFALCWLPVHAINCITLF. An adenosine-binding site is contributed by Asn-254. The Extracellular portion of the chain corresponds to 260-267; sequence HPALAKDK. A helical transmembrane segment spans residues 268-291; the sequence is PKWVMNVAILLSHANSVVNPIVYA. Positions 279 and 280 each coordinate adenosine. Residues 292–332 lie on the Cytoplasmic side of the membrane; that stretch reads YRNRDFRYSFHKIISRYVLCQAETKGGSGQAGAQSTLSLGL. Residue Cys-311 is the site of S-palmitoyl cysteine attachment.

The protein belongs to the G-protein coupled receptor 1 family.

The protein resides in the cell membrane. In terms of biological role, receptor for adenosine. The activity of this receptor is mediated by G proteins which activate adenylyl cyclase. This chain is Adenosine receptor A2b (Adora2b), found in Mus musculus (Mouse).